Here is an 85-residue protein sequence, read N- to C-terminus: Large ribosomal subunit protein bL27 (85 aa).

The tract at residues 1–22 is disordered; that stretch reads MAHKKAGGSTRNGRDSESKRLG.

Belongs to the bacterial ribosomal protein bL27 family.

The sequence is that of Large ribosomal subunit protein bL27 from Aliivibrio salmonicida (strain LFI1238) (Vibrio salmonicida (strain LFI1238)).